Here is an 82-residue protein sequence, read N- to C-terminus: RNA-binding protein KhpA (82 aa).

The KH domain occupies 35 to 82 (STILELRVSQSDVGKIIGRRGRIARAIRTLLGACAAKTNRRVQLEILD).

It belongs to the KhpA RNA-binding protein family. As to quaternary structure, forms a complex with KhpB.

It is found in the cytoplasm. Its function is as follows. A probable RNA chaperone. Forms a complex with KhpB which binds to cellular RNA and controls its expression. Plays a role in peptidoglycan (PG) homeostasis and cell length regulation. The protein is RNA-binding protein KhpA of Borreliella burgdorferi (strain ATCC 35210 / DSM 4680 / CIP 102532 / B31) (Borrelia burgdorferi).